A 94-amino-acid polypeptide reads, in one-letter code: Co-chaperonin GroES (94 aa).

This sequence belongs to the GroES chaperonin family. Heptamer of 7 subunits arranged in a ring. Interacts with the chaperonin GroEL.

It localises to the cytoplasm. In terms of biological role, together with the chaperonin GroEL, plays an essential role in assisting protein folding. The GroEL-GroES system forms a nano-cage that allows encapsulation of the non-native substrate proteins and provides a physical environment optimized to promote and accelerate protein folding. GroES binds to the apical surface of the GroEL ring, thereby capping the opening of the GroEL channel. The protein is Co-chaperonin GroES of Streptococcus pneumoniae serotype 19F (strain G54).